The chain runs to 118 residues: Aspartate 1-decarboxylase (118 aa).

Catalysis depends on Ser25, which acts as the Schiff-base intermediate with substrate; via pyruvic acid. Ser25 carries the pyruvic acid (Ser) modification. A substrate-binding site is contributed by Thr57. Tyr58 (proton donor) is an active-site residue. 73–75 (GAA) lines the substrate pocket.

This sequence belongs to the PanD family. As to quaternary structure, heterooctamer of four alpha and four beta subunits. Requires pyruvate as cofactor. In terms of processing, is synthesized initially as an inactive proenzyme, which is activated by self-cleavage at a specific serine bond to produce a beta-subunit with a hydroxyl group at its C-terminus and an alpha-subunit with a pyruvoyl group at its N-terminus.

Its subcellular location is the cytoplasm. The catalysed reaction is L-aspartate + H(+) = beta-alanine + CO2. Its pathway is cofactor biosynthesis; (R)-pantothenate biosynthesis; beta-alanine from L-aspartate: step 1/1. Its function is as follows. Catalyzes the pyruvoyl-dependent decarboxylation of aspartate to produce beta-alanine. This is Aspartate 1-decarboxylase from Caulobacter vibrioides (strain ATCC 19089 / CIP 103742 / CB 15) (Caulobacter crescentus).